We begin with the raw amino-acid sequence, 1017 residues long: MMSEGKPPDKKRPRRSLSISKNKKKASNSIISCFNNAPPAKLACPVCSKMVPRYDLNRHLDEMCANNDFVQVDPGQVGLINSNVSMVDLTSVTLEDVTPKKSPPPKTNLTPGQSDSAKREVKQKISPYFKSNDVVCKNQDELRNRSVKVICLGSLASKLSRKYVKAKKSIDKDEEFAGSSPQSSKSTVVKSLIDNSSEIEDEDQILENSSQKENVFKCDSLKEECIPEHMVRGSKIMEAESQKATRECEKSALTPGFSDNAIMLFSPDFTLRNTLKSTSEDSLVKQECIKEVVEKREACHCEEVKMTVASEAKIQLSDSEAKSHSSADDASAWSNIQEAPLQDDSCLNNDIPHSIPLEQGSSCNGPGQTTGHPYYLRSFLVVLKTVLENEDDMLLFDEQEKGIVTKFYQLSATGQKLYVRLFQRKLSWIKMTKLEYEEIALDLTPVIEELTNAGFLQTESELQELSEVLELLSAPELKSLAKTFHLVNPNGQKQQLVDAFLKLAKQRSVCTWGKNKPGIGAVILKRAKALAGQSVRICKGPRAVFSRILLLFSLTDSMEDEDAACGGQGQLSTVLLVNLGRMEFPSYTINRKTHIFQDRDDLIRYAAATHMLSDISSAMANGNWEEAKELAQCAKRDWNRLKNHPSLRCHEDLPLFLRCFTVGWIYTRILSRFVEILQRLHMYEEAVRELESLLSQRIYCPDSRGRWWDRLALNLHQHLKRLEPTIKCITEGLADPEVRTGHRLSLYQRAVRLRESPSCKKFKHLFQQLPEMAVQDVKHVTITGRLCPQRGMCKSVFVMEAGEAADPTTVLCSVEELALAHYRRSGFDQGIHGEGSTFSTLYGLLLWDIIFMDGIPDVFRNACQAFPLDLCTDSFFTSRRPALEARLQLIHDAPEESLRAWVAATWHEQEGRVASLVSWDRFTSLQQAQDLVSCLGGPVLSGVCRHLAADFRHCRGGLPDLVVWNSQSRHFKLVEVKGPNDRLSHKQMIWLAELQKLGAEVEVCHVVAVGAKSQSLS.

A compositionally biased stretch (basic and acidic residues) spans 1 to 10 (MMSEGKPPDK). The interval 1–23 (MMSEGKPPDKKRPRRSLSISKNK) is disordered. A compositionally biased stretch (basic residues) spans 11–23 (KRPRRSLSISKNK). Positions 14–22 (RRSLSISKN) match the D-box motif. Residues 41 to 69 (KLACPVCSKMVPRYDLNRHLDEMCANNDF) form a UBZ4-type zinc finger. Zn(2+)-binding residues include cysteine 44, cysteine 47, histidine 59, and cysteine 64. Disordered regions lie at residues 95-121 (EDVTPKKSPPPKTNLTPGQSDSAKREV) and 170-189 (IDKDEEFAGSSPQSSKSTVV). Polar residues predominate over residues 179–189 (SSPQSSKSTVV). Phosphoserine is present on serine 180. The KEN box motif lies at 212 to 214 (KEN). Positions 671-696 (SRFVEILQRLHMYEEAVRELESLLSQ) form a coiled coil. The Mn(2+) site is built by glutamate 834, aspartate 960, glutamate 975, and valine 976. Residues 895–1007 (EESLRAWVAA…GAEVEVCHVV (113 aa)) enclose the VRR-NUC domain.

The protein belongs to the FAN1 family. As to quaternary structure, interacts with FANCD2 (when monoubiquitinated). Interacts with FANCI, MLH1, MLH3 and PMS2. Mn(2+) serves as cofactor. The cofactor is Mg(2+). Ubiquitinated and degraded during mitotic exit by the APC/C-Cdh1 complex.

The protein localises to the nucleus. It catalyses the reaction Hydrolytically removes 5'-nucleotides successively from the 3'-hydroxy termini of 3'-hydroxy-terminated oligonucleotides.. In terms of biological role, nuclease required for the repair of DNA interstrand cross-links (ICL) recruited at sites of DNA damage by monoubiquitinated FANCD2. Specifically involved in repair of ICL-induced DNA breaks by being required for efficient homologous recombination, probably in the resolution of homologous recombination intermediates. Not involved in DNA double-strand breaks resection. Acts as a 5'-3' exonuclease that anchors at a cut end of DNA and cleaves DNA successively at every third nucleotide, allowing to excise an ICL from one strand through flanking incisions. Probably keeps excising with 3'-flap annealing until it reaches and unhooks the ICL. Acts at sites that have a 5'-terminal phosphate anchor at a nick or a 1- or 2-nucleotide flap and is augmented by a 3' flap. Also has endonuclease activity toward 5'-flaps. This is Fanconi-associated nuclease 1 from Homo sapiens (Human).